A 1018-amino-acid polypeptide reads, in one-letter code: Putative type I restriction enzyme MjaVIIIP endonuclease subunit (1018 aa).

The protein belongs to the HsdR family. As to quaternary structure, the type I restriction/modification system is composed of three polypeptides R, M and S.

The enzyme catalyses Endonucleolytic cleavage of DNA to give random double-stranded fragments with terminal 5'-phosphates, ATP is simultaneously hydrolyzed.. The restriction (R) subunit of a type I restriction enzyme that recognizes 5'-GAYN(5)GTAA-3' and cleaves a random distance away. The R subunit is required for both endonuclease and ATPase activities but not for modification. After locating a non-methylated recognition site, the enzyme complex serves as a molecular motor that translocates DNA in an ATP-dependent manner until a collision occurs that triggers cleavage. This Methanocaldococcus jannaschii (strain ATCC 43067 / DSM 2661 / JAL-1 / JCM 10045 / NBRC 100440) (Methanococcus jannaschii) protein is Putative type I restriction enzyme MjaVIIIP endonuclease subunit.